Reading from the N-terminus, the 358-residue chain is tRNA-specific 2-thiouridylase MnmA (358 aa).

ATP contacts are provided by residues 22-29 (LVSGGIDS) and Phe-48. Catalysis depends on Cys-105, which acts as the Nucleophile. A disulfide bridge links Cys-105 with Cys-201. ATP is bound at residue Gly-129. Positions 151–153 (KEQ) are interaction with tRNA. The active-site Cysteine persulfide intermediate is Cys-201. The interval 306–307 (RY) is interaction with tRNA.

Belongs to the MnmA/TRMU family.

Its subcellular location is the cytoplasm. The catalysed reaction is S-sulfanyl-L-cysteinyl-[protein] + uridine(34) in tRNA + AH2 + ATP = 2-thiouridine(34) in tRNA + L-cysteinyl-[protein] + A + AMP + diphosphate + H(+). Catalyzes the 2-thiolation of uridine at the wobble position (U34) of tRNA, leading to the formation of s(2)U34. The polypeptide is tRNA-specific 2-thiouridylase MnmA (Desulfosudis oleivorans (strain DSM 6200 / JCM 39069 / Hxd3) (Desulfococcus oleovorans)).